Reading from the N-terminus, the 181-residue chain is uncharacterized protein (181 aa).

The Cytoplasmic segment spans residues 1–14 (MQKCIMRSTEFKTH). Residues 15-35 (FSFHSIFSFPLSAALLALISA) form a helical membrane-spanning segment. Residues 36–58 (SEPASKAFINVQFISSPLVKKEV) lie on the Extracellular side of the membrane. Residues 59 to 79 (LPFIVSFHSLSSNGILSFSPF) form a helical membrane-spanning segment. Residues 80 to 84 (TSSNL) are Cytoplasmic-facing. Residues 85–105 (SIAQLPFLIKVPLLSMGSLAL) traverse the membrane as a helical segment. The Extracellular portion of the chain corresponds to 106-116 (ENFNKFIPRAD). Residues 117–137 (LVAAWVTIIMVFTFGNFLSTL) traverse the membrane as a helical segment. The Cytoplasmic portion of the chain corresponds to 138–153 (SIKTGQNLWHLSKISS). The chain crosses the membrane as a helical span at residues 154–174 (SVSPLLLGIILGSQSGEIMLG). Over 175–181 (KNLLITS) the chain is Extracellular.

It localises to the membrane. This is an uncharacterized protein from Saccharomyces cerevisiae (strain ATCC 204508 / S288c) (Baker's yeast).